The chain runs to 103 residues: Small ribosomal subunit protein uS10 (103 aa).

This sequence belongs to the universal ribosomal protein uS10 family. Part of the 30S ribosomal subunit.

In terms of biological role, involved in the binding of tRNA to the ribosomes. The chain is Small ribosomal subunit protein uS10 from Borreliella burgdorferi (strain ATCC 35210 / DSM 4680 / CIP 102532 / B31) (Borrelia burgdorferi).